Consider the following 473-residue polypeptide: Phosphatidylserine synthase 1 (473 aa).

Alanine 2 carries the post-translational modification N-acetylalanine. The Cytoplasmic segment spans residues 2–35 (ASCVGSRTLSKDDVNYKMHFRMINEQQVEDITID). The chain crosses the membrane as a helical span at residues 36 to 56 (FFYRPHTITLLSFTIVSLMYF). The Lumenal segment spans residues 57–72 (AFTRDDSVPEDNIWRG). A helical transmembrane segment spans residues 73-93 (ILSVIFFFLIISVLAFPNGPF). The Cytoplasmic portion of the chain corresponds to 94–102 (TRPHPALWR). Residues 103–123 (MVFGLSVLYFLFLVFLLFLNF) traverse the membrane as a helical segment. Over 124 to 186 (EQVKSLMYWL…AMKALLIRSY (63 aa)) the chain is Lumenal. The chain crosses the membrane as a helical span at residues 187 to 207 (GLCWTISITWELTELFFMHLL). Residues 208–216 (PNFAECWWD) lie on the Cytoplasmic side of the membrane. The chain crosses the membrane as a helical span at residues 217–237 (QVILDILLCNGGGIWLGMVVC). Topologically, residues 238–286 (RFLEMRTYHWASFKDIHTTTGKIKRAVLQFTPASWTYVRWFDPKSSFQR) are lumenal. Residues 287-307 (VAGIYLFMIIWQLTELNTFFL) traverse the membrane as a helical segment. The Cytoplasmic segment spans residues 308 to 319 (KHIFVFQASHPL). Residues 320–342 (SWCRILFIGGITAPTVRQYYAYL) form a helical membrane-spanning segment. Over 343–355 (TDTQCKRVGTQCW) the chain is Lumenal. A helical transmembrane segment spans residues 356-376 (VFGVIGFLEAIVCIKFGQDLF). The Cytoplasmic segment spans residues 377–383 (SKTQILY). Residues 384 to 404 (VVLWLLCVAFTTFLCLYGMVW) form a helical membrane-spanning segment. Residues 405–473 (YAEHYGHREK…SKVTNGVGKK (69 aa)) are Lumenal-facing. Residues serine 417, serine 425, and serine 454 each carry the phosphoserine modification. The disordered stretch occupies residues 427-473 (DISWPHGKGSKGSEDGPHKHPGNSESHSSRRRNRHSKSKVTNGVGKK). The span at 455–464 (SRRRNRHSKS) shows a compositional bias: basic residues.

The protein belongs to the phosphatidyl serine synthase family.

Its subcellular location is the endoplasmic reticulum membrane. The catalysed reaction is a 1,2-diacyl-sn-glycero-3-phosphoethanolamine + L-serine = a 1,2-diacyl-sn-glycero-3-phospho-L-serine + ethanolamine. It catalyses the reaction a 1,2-diacyl-sn-glycero-3-phosphocholine + L-serine = a 1,2-diacyl-sn-glycero-3-phospho-L-serine + choline. It participates in phospholipid metabolism; phosphatidylserine biosynthesis. Functionally, catalyzes a base-exchange reaction in which the polar head group of phosphatidylethanolamine (PE) or phosphatidylcholine (PC) is replaced by L-serine. Catalyzes mainly the conversion of phosphatidylcholine but also converts, in vitro and to a lesser extent, phosphatidylethanolamine. This is Phosphatidylserine synthase 1 (PTDSS1) from Bos taurus (Bovine).